We begin with the raw amino-acid sequence, 527 residues long: DNA polymerase epsilon subunit 2 (527 aa).

This sequence belongs to the DNA polymerase epsilon subunit B family. As to quaternary structure, component of the DNA polymerase epsilon complex consisting of four subunits: the catalytic subunit POLE and the accessory subunits POLE2, POLE3 and POLE4.

Its subcellular location is the nucleus. Its function is as follows. Accessory component of the DNA polymerase epsilon complex. Participates in DNA repair and in chromosomal DNA replication. In Bos taurus (Bovine), this protein is DNA polymerase epsilon subunit 2 (POLE2).